The following is a 59-amino-acid chain: U-scoloptoxin(23)-Er2a (59 aa).

The protein belongs to the scoloptoxin-23 family. Contains 1 disulfide bond. As to expression, expressed by the venom gland.

It is found in the secreted. In Ethmostigmus rubripes (Giant centipede), this protein is U-scoloptoxin(23)-Er2a.